The sequence spans 205 residues: Pyrrolidone-carboxylate peptidase (205 aa).

Residues Glu-78, Cys-141, and His-165 contribute to the active site.

The protein belongs to the peptidase C15 family. In terms of assembly, homotetramer.

The protein resides in the cytoplasm. It carries out the reaction Release of an N-terminal pyroglutamyl group from a polypeptide, the second amino acid generally not being Pro.. Functionally, removes 5-oxoproline from various penultimate amino acid residues except L-proline. In Thermosipho africanus (strain TCF52B), this protein is Pyrrolidone-carboxylate peptidase.